The following is a 512-amino-acid chain: MLFPISMSATEFLLASVIFCLVFWVIRASRPQVPKGLKNPPGPWGWPLIGHMLTLGKNPHLALSRMSQQYGDVLQIRIGSTPVVVLSGLDTIRQALVRQGDDFKGRPDLYTFTLISNGQSMSFSPDSGPVWAARRRLAQNGLKSFSIASDPASSTSCYLEEHVSKEAEVLISTLQELMAGPGHFNPYRYVVVSVTNVICAICFGRRYDHNHQELLSLVNLNNNFGEVVGSGNPADFIPILRYLPNPSLNAFKDLNEKFYSFMQKMVKEHYKTFEKGHIRDITDSLIEHCQEKQLDENANVQLSDEKIINIVLDLFGAGFDTVTTAISWSLMYLVMNPRVQRKIQEELDTVIGRSRRPRLSDRSHLPYMEAFILETFRHSSFVPFTIPHSTTRDTSLKGFYIPKGRCVFVNQWQINHDQKLWVNPSEFLPERFLTPDGAIDKVLSEKVIIFGMGKRKCIGETIARWEVFLFLAILLQRVEFSVPLGVKVDMTPIYGLTMKHACCEHFQMQLRS.

Residues 29–40 (SRPQVPKGLKNP) are mitochondrial targeting signal. Ser67 carries an O-linked (GlcNAc) serine glycan. Phe224 provides a ligand contact to substrate. Cys457 is a heme binding site.

This sequence belongs to the cytochrome P450 family. In terms of assembly, interacts with cytosolic chaperones HSP70 and HSP90; this interaction is required for initial targeting to mitochondria. Interacts (via mitochondrial targeting signal) with TOMM40 (via N-terminus); this interaction is required for translocation across the mitochondrial outer membrane. Heme is required as a cofactor. Lung, lymphocytes and placenta.

The protein localises to the endoplasmic reticulum membrane. It is found in the mitochondrion inner membrane. Its subcellular location is the microsome membrane. It localises to the cytoplasm. The catalysed reaction is an organic molecule + reduced [NADPH--hemoprotein reductase] + O2 = an alcohol + oxidized [NADPH--hemoprotein reductase] + H2O + H(+). It carries out the reaction estrone + reduced [NADPH--hemoprotein reductase] + O2 = 2-hydroxyestrone + oxidized [NADPH--hemoprotein reductase] + H2O + H(+). It catalyses the reaction estrone + reduced [NADPH--hemoprotein reductase] + O2 = 4-hydroxyestrone + oxidized [NADPH--hemoprotein reductase] + H2O + H(+). The enzyme catalyses estrone + reduced [NADPH--hemoprotein reductase] + O2 = 6alpha-hydroxyestrone + oxidized [NADPH--hemoprotein reductase] + H2O + H(+). The catalysed reaction is estrone + reduced [NADPH--hemoprotein reductase] + O2 = 15alpha-hydroxyestrone + oxidized [NADPH--hemoprotein reductase] + H2O + H(+). It carries out the reaction estrone + reduced [NADPH--hemoprotein reductase] + O2 = 16alpha-hydroxyestrone + oxidized [NADPH--hemoprotein reductase] + H2O + H(+). It catalyses the reaction 17beta-estradiol + reduced [NADPH--hemoprotein reductase] + O2 = 2-hydroxy-17beta-estradiol + oxidized [NADPH--hemoprotein reductase] + H2O + H(+). The enzyme catalyses 17beta-estradiol + reduced [NADPH--hemoprotein reductase] + O2 = 4-hydroxy-17beta-estradiol + oxidized [NADPH--hemoprotein reductase] + H2O + H(+). The catalysed reaction is 17beta-estradiol + reduced [NADPH--hemoprotein reductase] + O2 = 6alpha-hydroxy-17beta-estradiol + oxidized [NADPH--hemoprotein reductase] + H2O + H(+). It carries out the reaction 17beta-estradiol + reduced [NADPH--hemoprotein reductase] + O2 = 7alpha-hydroxy-17beta-estradiol + oxidized [NADPH--hemoprotein reductase] + H2O + H(+). It catalyses the reaction 17beta-estradiol + reduced [NADPH--hemoprotein reductase] + O2 = 15alpha-hydroxy-17beta-estradiol + oxidized [NADPH--hemoprotein reductase] + H2O + H(+). The enzyme catalyses (5Z,8Z,11Z)-eicosatrienoate + reduced [NADPH--hemoprotein reductase] + O2 = 19-hydroxy-(5Z,8Z,11Z)-eicosatrienoate + oxidized [NADPH--hemoprotein reductase] + H2O + H(+). The catalysed reaction is (5Z,8Z,11Z,14Z)-eicosatetraenoate + reduced [NADPH--hemoprotein reductase] + O2 = 16-hydroxy-(5Z,8Z,11Z,14Z)-eicosatetraenoate + oxidized [NADPH--hemoprotein reductase] + H2O + H(+). It carries out the reaction (5Z,8Z,11Z,14Z)-eicosatetraenoate + reduced [NADPH--hemoprotein reductase] + O2 = 17-hydroxy-(5Z,8Z,11Z,14Z)-eicosatetraenoate + oxidized [NADPH--hemoprotein reductase] + H2O + H(+). It catalyses the reaction (5Z,8Z,11Z,14Z)-eicosatetraenoate + reduced [NADPH--hemoprotein reductase] + O2 = 18-hydroxy-(5Z,8Z,11Z,14Z)-eicosatetraenoate + oxidized [NADPH--hemoprotein reductase] + H2O + H(+). The enzyme catalyses (5Z,8Z,11Z,14Z)-eicosatetraenoate + reduced [NADPH--hemoprotein reductase] + O2 = 19-hydroxy-(5Z,8Z,11Z,14Z)-eicosatetraenoate + oxidized [NADPH--hemoprotein reductase] + H2O + H(+). The catalysed reaction is (5Z,8Z,11Z,14Z,17Z)-eicosapentaenoate + reduced [NADPH--hemoprotein reductase] + O2 = 19-hydroxy-(5Z,8Z,11Z,14Z,17Z)-eicosapentaenoate + oxidized [NADPH--hemoprotein reductase] + H2O + H(+). It carries out the reaction (5Z,8Z,11Z,14Z)-eicosatetraenoate + reduced [NADPH--hemoprotein reductase] + O2 = (8R,9S)-epoxy-(5Z,11Z,14Z)-eicosatrienoate + oxidized [NADPH--hemoprotein reductase] + H2O + H(+). It catalyses the reaction (5Z,8Z,11Z,14Z)-eicosatetraenoate + reduced [NADPH--hemoprotein reductase] + O2 = (11R,12S)-epoxy-(5Z,8Z,14Z)-eicosatrienoate + oxidized [NADPH--hemoprotein reductase] + H2O + H(+). The enzyme catalyses (5Z,8Z,11Z,14Z)-eicosatetraenoate + reduced [NADPH--hemoprotein reductase] + O2 = (14S,15R)-epoxy-(5Z,8Z,11Z)-eicosatrienoate + oxidized [NADPH--hemoprotein reductase] + H2O + H(+). The catalysed reaction is (5Z,8Z,11Z,14Z)-eicosatetraenoate + reduced [NADPH--hemoprotein reductase] + O2 = (14R,15S)-epoxy-(5Z,8Z,11Z)-eicosatrienoate + oxidized [NADPH--hemoprotein reductase] + H2O + H(+). It carries out the reaction (5Z,8Z,11Z,14Z,17Z)-eicosapentaenoate + reduced [NADPH--hemoprotein reductase] + O2 = (17R,18S)-epoxy-(5Z,8Z,11Z,14Z)-eicosatetraenoate + oxidized [NADPH--hemoprotein reductase] + H2O + H(+). It catalyses the reaction (4Z,7Z,10Z,13Z,16Z,19Z)-docosahexaenoate + reduced [NADPH--hemoprotein reductase] + O2 = (19S,20R)-epoxy-(4Z,7Z,10Z,13Z,16Z)-docosapentaenoate + oxidized [NADPH--hemoprotein reductase] + H2O + H(+). The enzyme catalyses (4Z,7Z,10Z,13Z,16Z,19Z)-docosahexaenoate + reduced [NADPH--hemoprotein reductase] + O2 = (19R,20S)-epoxy-(4Z,7Z,10Z,13Z,16Z)-docosapentaenoate + oxidized [NADPH--hemoprotein reductase] + H2O + H(+). The catalysed reaction is all-trans-retinol + reduced [NADPH--hemoprotein reductase] + O2 = all-trans-retinal + oxidized [NADPH--hemoprotein reductase] + 2 H2O + H(+). It carries out the reaction all-trans-retinal + reduced [NADPH--hemoprotein reductase] + O2 = all-trans-retinoate + oxidized [NADPH--hemoprotein reductase] + H2O + 2 H(+). It catalyses the reaction (13S)-hydroperoxy-(9Z,11E)-octadecadienoate = 13-oxo-(9Z,11E)-octadecadienoate + H2O. The enzyme catalyses (12S)-hydroperoxy-(5Z,8Z,10E,14Z)-eicosatetraenoate = 12-oxo-(5Z,8Z,10E,14Z)-eicosatetraenoate + H2O. The catalysed reaction is (15S)-hydroperoxy-(5Z,8Z,11Z,13E)-eicosatetraenoate = 15-oxo-(5Z,8Z,11Z,13E)-eicosatetraenoate + H2O. It carries out the reaction (5S)-hydroperoxy-(6E,8Z,11Z,14Z)-eicosatetraenoate = 5-oxo-(6E,8Z,11Z,14Z)-eicosatetraenoate + H2O. It functions in the pathway steroid hormone biosynthesis. It participates in lipid metabolism; fatty acid metabolism. The protein operates within cofactor metabolism; retinol metabolism. A cytochrome P450 monooxygenase involved in the metabolism of various endogenous substrates, including fatty acids, steroid hormones and vitamins. Mechanistically, uses molecular oxygen inserting one oxygen atom into a substrate, and reducing the second into a water molecule, with two electrons provided by NADPH via cytochrome P450 reductase (NADPH--hemoprotein reductase). Catalyzes the hydroxylation of carbon-hydrogen bonds. Exhibits high catalytic activity for the formation of hydroxyestrogens from estrone (E1) and 17beta-estradiol (E2), namely 2-hydroxy E1 and E2, as well as D-ring hydroxylated E1 and E2 at the C15-alpha and C16-alpha positions. Displays different regioselectivities for polyunsaturated fatty acids (PUFA) hydroxylation. Catalyzes the epoxidation of double bonds of certain PUFA. Converts arachidonic acid toward epoxyeicosatrienoic acid (EET) regioisomers, 8,9-, 11,12-, and 14,15-EET, that function as lipid mediators in the vascular system. Displays an absolute stereoselectivity in the epoxidation of eicosapentaenoic acid (EPA) producing the 17(R),18(S) enantiomer. May play an important role in all-trans retinoic acid biosynthesis in extrahepatic tissues. Catalyzes two successive oxidative transformation of all-trans retinol to all-trans retinal and then to the active form all-trans retinoic acid. May also participate in eicosanoids metabolism by converting hydroperoxide species into oxo metabolites (lipoxygenase-like reaction, NADPH-independent). The polypeptide is Cytochrome P450 1A1 (Homo sapiens (Human)).